The following is an 89-amino-acid chain: Small ribosomal subunit protein uS15 (89 aa).

The protein belongs to the universal ribosomal protein uS15 family. Part of the 30S ribosomal subunit. Forms a bridge to the 50S subunit in the 70S ribosome, contacting the 23S rRNA.

Its function is as follows. One of the primary rRNA binding proteins, it binds directly to 16S rRNA where it helps nucleate assembly of the platform of the 30S subunit by binding and bridging several RNA helices of the 16S rRNA. Functionally, forms an intersubunit bridge (bridge B4) with the 23S rRNA of the 50S subunit in the ribosome. The protein is Small ribosomal subunit protein uS15 of Chelativorans sp. (strain BNC1).